The following is a 383-amino-acid chain: Spermidine/putrescine import ATP-binding protein PotA (383 aa).

Residues Ile-12–Ile-246 enclose the ABC transporter domain. Position 48-55 (Gly-48–Thr-55) interacts with ATP.

The protein belongs to the ABC transporter superfamily. Spermidine/putrescine importer (TC 3.A.1.11.1) family. In terms of assembly, the complex is composed of two ATP-binding proteins (PotA), two transmembrane proteins (PotB and PotC) and a solute-binding protein (PotD).

It is found in the cell membrane. The enzyme catalyses ATP + H2O + polyamine-[polyamine-binding protein]Side 1 = ADP + phosphate + polyamineSide 2 + [polyamine-binding protein]Side 1.. Its function is as follows. Part of the ABC transporter complex PotABCD involved in spermidine/putrescine import. Responsible for energy coupling to the transport system. This chain is Spermidine/putrescine import ATP-binding protein PotA, found in Acidothermus cellulolyticus (strain ATCC 43068 / DSM 8971 / 11B).